The following is a 309-amino-acid chain: MDYVRTQVEAVFDDSEQDGSTISESGSCDSSSDRSFADELGLMELLEGDKAHDLIYRNCKSGLGDQCQILSVLRNGFRNVGSRAKLKTFQVFQEAVQMKHGGDGGAKVKYGWCSVSKHELKTIFEYGFSEPLRNDGSFGRGLYLSPDNSPLDCLKDSASESEDGMRFLLLCRVLLGKSEIVPQGSTRSCPSSPEFDSGVDDLVSTKKYIVWSTHMNTHVLPEFLVCIKAPFNLTRSPKRLRSPWMAFPVLIKALSKFLPPSQILVIQKHYKDQQNRRITRSELIQRVRSITGDKLLVHIIKACGHKVQH.

One can recognise a PARP catalytic domain in the interval 28–255 (CDSSSDRSFA…AFPVLIKALS (228 aa)). The RST domain maps to 238–309 (KRLRSPWMAF…IKACGHKVQH (72 aa)).

Interacts with dehydration-responsive DREB2 proteins and a number of transcription factors belonging to several protein families.

Its subcellular location is the nucleus matrix. In terms of biological role, probable inactive ADP-ribosyltransferase that may be involved in stress and developmental responses. This Arabidopsis thaliana (Mouse-ear cress) protein is Probable inactive poly [ADP-ribose] polymerase SRO5 (SRO5).